The following is a 359-amino-acid chain: Fructose-bisphosphate aldolase, cytoplasmic isozyme 2 (359 aa).

Arginine 52 and lysine 143 together coordinate substrate. Glutamate 184 serves as the catalytic Proton acceptor. Residue lysine 226 is the Schiff-base intermediate with dihydroxyacetone-P of the active site.

Belongs to the class I fructose-bisphosphate aldolase family.

Its subcellular location is the cytoplasm. It catalyses the reaction beta-D-fructose 1,6-bisphosphate = D-glyceraldehyde 3-phosphate + dihydroxyacetone phosphate. It functions in the pathway carbohydrate degradation; glycolysis; D-glyceraldehyde 3-phosphate and glycerone phosphate from D-glucose: step 4/4. The polypeptide is Fructose-bisphosphate aldolase, cytoplasmic isozyme 2 (Pisum sativum (Garden pea)).